Consider the following 512-residue polypeptide: GMP synthase [glutamine-hydrolyzing] (512 aa).

In terms of domain architecture, Glutamine amidotransferase type-1 spans G5–N195. The active-site Nucleophile is C82. Active-site residues include H169 and E171. Residues W196–R387 form the GMPS ATP-PPase domain. An ATP-binding site is contributed by S223 to S229.

Homodimer.

The catalysed reaction is XMP + L-glutamine + ATP + H2O = GMP + L-glutamate + AMP + diphosphate + 2 H(+). The protein operates within purine metabolism; GMP biosynthesis; GMP from XMP (L-Gln route): step 1/1. Its function is as follows. Catalyzes the synthesis of GMP from XMP. The protein is GMP synthase [glutamine-hydrolyzing] of Fusobacterium nucleatum subsp. nucleatum (strain ATCC 25586 / DSM 15643 / BCRC 10681 / CIP 101130 / JCM 8532 / KCTC 2640 / LMG 13131 / VPI 4355).